The primary structure comprises 111 residues: Large ribosomal subunit protein bL20c (111 aa).

This sequence belongs to the bacterial ribosomal protein bL20 family.

Its subcellular location is the plastid. The protein localises to the chloroplast. Its function is as follows. Binds directly to 23S ribosomal RNA and is necessary for the in vitro assembly process of the 50S ribosomal subunit. It is not involved in the protein synthesizing functions of that subunit. The protein is Large ribosomal subunit protein bL20c of Ostreococcus tauri.